A 287-amino-acid chain; its full sequence is Myoblast determination protein 1 homolog B (287 aa).

Residues 96 to 147 enclose the bHLH domain; the sequence is DRRRAATMRERRRLSKVNDAFETLKRCTSTNPNQRLPKVDILRNAISYIDSL. Disordered regions lie at residues 161-202 and 231-277; these read NMEH…FYTD and QSPS…QLSH. Low complexity predominate over residues 168-188; that stretch reads DSDASSPSSNCSDGMNSPPCS. The span at 267 to 277 shows a compositional bias: polar residues; that stretch reads SPGNSCTQLSH.

In terms of assembly, efficient DNA binding requires dimerization with another bHLH protein.

Its subcellular location is the nucleus. In terms of biological role, may act as a transcriptional activator that promotes transcription of muscle-specific target genes and plays a role in muscle differentiation. The sequence is that of Myoblast determination protein 1 homolog B (myod1-b) from Xenopus laevis (African clawed frog).